Here is a 278-residue protein sequence, read N- to C-terminus: Hydroxyethylthiazole kinase (278 aa).

Met-48 contributes to the substrate binding site. ATP is bound by residues Arg-124 and Thr-175. Residue Gly-202 coordinates substrate.

This sequence belongs to the Thz kinase family. Mg(2+) serves as cofactor.

The enzyme catalyses 5-(2-hydroxyethyl)-4-methylthiazole + ATP = 4-methyl-5-(2-phosphooxyethyl)-thiazole + ADP + H(+). The protein operates within cofactor biosynthesis; thiamine diphosphate biosynthesis; 4-methyl-5-(2-phosphoethyl)-thiazole from 5-(2-hydroxyethyl)-4-methylthiazole: step 1/1. Its function is as follows. Catalyzes the phosphorylation of the hydroxyl group of 4-methyl-5-beta-hydroxyethylthiazole (THZ). This Clostridium botulinum (strain Eklund 17B / Type B) protein is Hydroxyethylthiazole kinase.